A 638-amino-acid chain; its full sequence is Probable beta-glucosidase C (638 aa).

Residues 1–18 form the signal peptide; it reads MKVLAPGYLAEASLTALA. N-linked (GlcNAc...) asparagine glycosylation is found at Asn-40, Asn-94, Asn-116, Asn-223, and Asn-274. Asp-341 is an active-site residue. N-linked (GlcNAc...) asparagine glycans are attached at residues Asn-364, Asn-480, Asn-488, and Asn-528.

It belongs to the glycosyl hydrolase 3 family.

It localises to the secreted. It carries out the reaction Hydrolysis of terminal, non-reducing beta-D-glucosyl residues with release of beta-D-glucose.. It functions in the pathway glycan metabolism; cellulose degradation. In terms of biological role, beta-glucosidases are one of a number of cellulolytic enzymes involved in the degradation of cellulosic biomass. Catalyzes the last step releasing glucose from the inhibitory cellobiose. The sequence is that of Probable beta-glucosidase C (bglC) from Aspergillus oryzae (strain ATCC 42149 / RIB 40) (Yellow koji mold).